The primary structure comprises 855 residues: MTDLSQHTPMMQQYFKLKHQHPDQLMFYRMGDFYELFYEDAKKAAKLLDITLTARGQSGGKAIPMAGIPFHSAEGYLAKLVKLGESVAICEQIGDPATSKGPVERQVVRIITPGTVSDEALLDERRDNLLAAILGDERLFGLAVLDITSGRFSVQEIKGWETLLAELERLNPAELLIPDDWPQGLPAEKRRGVRRRAPWDFDRDSAHKSLCQQFGTQDLKGFGCQNLTLAIGAAGCLLAYAKETQRTALPHLRSLRHDRLDDTVILDGASRRNLELDINLSGGRENTLQSVVDRCQTAMASRLMSRWLNRPLRDRAVLEARQESIACLLERYRFENLQPQLKEIGDLERILARIGLRNARPRDLARLRDALAALPDLQNAMTELEAPHLQALATTIGTYPELAELLAKAIIDNPPAVIRDGGVIKTGYDAELDELQALSENAGQFLMDLEAREKARTGLPNLKVGYNRIHGYFIELPRVQAEQAPADYIRRQTLKGAERFITPELKAFEDKALSAQSRALAREKALYEELLERLIGHLAPLQDSASALAELDVLANLAERALNLDLNRPRFVEHTCLHIEQGRHPVVEQVLETPFVANDLALDADTRMLVITGPNMGGKSTYMRQTALIVLLAHIGSFVPAARCELSLVDRIFTRIGSSDDLAGGRSTFMVEMSETANILHNATDKSLVLMDEVGRGTSTFDGLSLAWAAAEDLARTRAFTLFATHYFELTVLPESQPAVANVHLNATEHNERIVFLHHVLPGPASQSYGLAVAQLAGVPSPVIQRAREHLKRLETTSLPHEVPSQQSGKPASPMQSDLFASLPHPVIDELSRINPDDISPRQALDLLYAWKMRV.

ATP is bound at residue 613–620 (GPNMGGKS). Residues 795–816 (ETTSLPHEVPSQQSGKPASPMQ) are disordered. Over residues 796–816 (TTSLPHEVPSQQSGKPASPMQ) the composition is skewed to polar residues.

The protein belongs to the DNA mismatch repair MutS family.

This protein is involved in the repair of mismatches in DNA. It is possible that it carries out the mismatch recognition step. This protein has a weak ATPase activity. The protein is DNA mismatch repair protein MutS of Pseudomonas paraeruginosa (strain DSM 24068 / PA7) (Pseudomonas aeruginosa (strain PA7)).